Consider the following 285-residue polypeptide: Probable endonuclease 4 (285 aa).

Zn(2+) is bound by residues histidine 69, histidine 109, glutamate 145, aspartate 179, histidine 182, histidine 216, aspartate 229, histidine 231, and glutamate 261.

Belongs to the AP endonuclease 2 family. Zn(2+) is required as a cofactor.

It carries out the reaction Endonucleolytic cleavage to 5'-phosphooligonucleotide end-products.. Endonuclease IV plays a role in DNA repair. It cleaves phosphodiester bonds at apurinic or apyrimidinic (AP) sites, generating a 3'-hydroxyl group and a 5'-terminal sugar phosphate. The sequence is that of Probable endonuclease 4 from Shigella boydii serotype 18 (strain CDC 3083-94 / BS512).